The following is a 76-amino-acid chain: Large ribosomal subunit protein bL31 (76 aa).

The Zn(2+) site is built by Cys-16, Cys-18, Cys-38, and Cys-41.

The protein belongs to the bacterial ribosomal protein bL31 family. Type A subfamily. Part of the 50S ribosomal subunit. Zn(2+) serves as cofactor.

Its function is as follows. Binds the 23S rRNA. This is Large ribosomal subunit protein bL31 from Nocardia farcinica (strain IFM 10152).